The following is a 526-amino-acid chain: Acetyl-CoA hydrolase (526 aa).

Residue T2 is modified to N-acetylthreonine. 277 to 281 is a binding site for CoA; it reads GIGNI. The 5-glutamyl coenzyme A thioester intermediate role is filled by E302. Position 350 is a phosphoserine (S350). N392 and G396 together coordinate CoA.

Belongs to the acetyl-CoA hydrolase/transferase family. As to quaternary structure, monomer. In terms of processing, glycosylated; contains mannose.

Its subcellular location is the cytoplasm. The enzyme catalyses acetyl-CoA + H2O = acetate + CoA + H(+). In terms of biological role, presumably involved in regulating the intracellular acetyl-CoA pool for fatty acid and cholesterol synthesis and fatty acid oxidation. It may be involved in overall regulation of acetylation during melatonin synthesis. This Saccharomyces cerevisiae (strain ATCC 204508 / S288c) (Baker's yeast) protein is Acetyl-CoA hydrolase (ACH1).